Consider the following 199-residue polypeptide: Pre T-cell antigen receptor alpha (199 aa).

A signal peptide spans 1–16 (MARTWLLLLLGVRCQA). Residues 17-146 (LPSGIAGTPF…PEPLGGTQRQ (130 aa)) lie on the Extracellular side of the membrane. Residues cysteine 47 and cysteine 107 are joined by a disulfide bond. N-linked (GlcNAc...) asparagine glycosylation is found at asparagine 67 and asparagine 117. The chain crosses the membrane as a helical span at residues 147–167 (VLWLSLLRLLLFKLLLLDVLL). The Cytoplasmic segment spans residues 168–199 (TCSHLRLHVLAGQHLQPPPSRKSLPPTHRIWT).

As to quaternary structure, heterodimer with TCRB; disulfide linked. This heterodimer assembles with CD3 proteins into a signaling-competent pre-T-cell receptor complex. Interacts with RHBDD1. As to expression, isoform 1 is expressed at higher levels than isoform 2 in the thymus while only isoform 2 is expressed in polyclonal beta-only cells. Isoform 1 shows a predominant expression in immature thymocytes.

Its subcellular location is the membrane. It is found in the cell membrane. In terms of biological role, component of the pre-T-cell receptor complex (composed of PTCRA, TCRB and the CD3 complex) that plays a crucial role in early T-cell development, particularly alpha-beta T cell differentiation. Isoform 1 acts to retain most TCRB intracellularly, while isoform 2 permits higher levels of cell surface TCRB expression and facilitates signaling from the CD3-TCRB complex. The chain is Pre T-cell antigen receptor alpha from Mus musculus (Mouse).